Here is a 253-residue protein sequence, read N- to C-terminus: Probable transcriptional regulatory protein Mmar10_2433 (253 aa).

It belongs to the TACO1 family.

The protein resides in the cytoplasm. This is Probable transcriptional regulatory protein Mmar10_2433 from Maricaulis maris (strain MCS10) (Caulobacter maris).